Consider the following 465-residue polypeptide: MPPCYPFLLSWEGWARDPPGRPGGAMRAHIITYGCQMNEYDSHLVASELVSLGWELVDSVEEADFVLVNTCAVRGKPVEKVRSLLGQLRKEKERRGLLIGMMGCLAQLDEGQQMAKKFGVDVLLGPGALTSLPEALKANERFWDLTFREDVLDYIPPPPKGALSAHVTIIRGCNHHCTYCIVPTTRGPEVSRHPDLILKEIELLKQAGVVEVTLLGQNVNSYGKDQPGFPSFAELLRMVGGMGIPRVRFLTSHPVNFTDDIIEAIAETPAICRYIHLPVQSGSDRVLRRMAREYRRAHYLERIRKIREALPDAVLSTDIIVGFPGETEEDFQETLSLYDEVGYDQAYMFIYSPRPGTPAYKHFQDLPREVKVERLMRLIEKQKEWSYRRNLEWVGKTVEVLVRGEAKEEGFVQGHDRGNHPVLVPASQAPVPGLYQVEIKQATPHLLFGEVVGAEAPAPIPLPVA.

In terms of domain architecture, MTTase N-terminal spans 26 to 141 (MRAHIITYGC…LPEALKANER (116 aa)). Residues C35, C71, C104, C173, C177, and C180 each coordinate [4Fe-4S] cluster. Residues 159–388 (PKGALSAHVT…IEKQKEWSYR (230 aa)) form the Radical SAM core domain. The TRAM domain occupies 391–453 (LEWVGKTVEV…PHLLFGEVVG (63 aa)).

Belongs to the methylthiotransferase family. MiaB subfamily. Monomer. The cofactor is [4Fe-4S] cluster.

Its subcellular location is the cytoplasm. It catalyses the reaction N(6)-dimethylallyladenosine(37) in tRNA + (sulfur carrier)-SH + AH2 + 2 S-adenosyl-L-methionine = 2-methylsulfanyl-N(6)-dimethylallyladenosine(37) in tRNA + (sulfur carrier)-H + 5'-deoxyadenosine + L-methionine + A + S-adenosyl-L-homocysteine + 2 H(+). In terms of biological role, catalyzes the methylthiolation of N6-(dimethylallyl)adenosine (i(6)A), leading to the formation of 2-methylthio-N6-(dimethylallyl)adenosine (ms(2)i(6)A) at position 37 in tRNAs that read codons beginning with uridine. This is tRNA-2-methylthio-N(6)-dimethylallyladenosine synthase from Thermus thermophilus (strain ATCC 27634 / DSM 579 / HB8).